A 150-amino-acid chain; its full sequence is 5-hydroxytryptamine receptor 1B (150 aa).

Topologically, residues Val1 to Thr83 are extracellular. Over residues Asp27–Ser40 the composition is skewed to polar residues. A disordered region spans residues Asp27–Gly50. A helical membrane pass occupies residues Leu84–Met105. The Cytoplasmic portion of the chain corresponds to Pro106–His115. Residues Leu116 to Thr138 traverse the membrane as a helical segment. Residues Asn133–Tyr137 carry the NPxxY motif; important for ligand-induced conformation changes and signaling motif. Residues Met139–Lys150 are Extracellular-facing.

Belongs to the G-protein coupled receptor 1 family. Homodimer. Heterodimer with HTR1D. Post-translationally, phosphorylated. Desensitization of the receptor may be mediated by its phosphorylation. In terms of processing, palmitoylated.

It is found in the cell membrane. G-protein coupled receptor for 5-hydroxytryptamine (serotonin). Also functions as a receptor for ergot alkaloid derivatives, various anxiolytic and antidepressant drugs and other psychoactive substances, such as lysergic acid diethylamide (LSD). Ligand binding causes a conformation change that triggers signaling via guanine nucleotide-binding proteins (G proteins) and modulates the activity of downstream effectors, such as adenylate cyclase. HTR1B is coupled to G(i)/G(o) G alpha proteins and mediates inhibitory neurotransmission by inhibiting adenylate cyclase activity. Arrestin family members inhibit signaling via G proteins and mediate activation of alternative signaling pathways. Regulates the release of 5-hydroxytryptamine, dopamine and acetylcholine in the brain, and thereby affects neural activity, nociceptive processing, pain perception, mood and behavior. Besides, plays a role in vasoconstriction of cerebral arteries. The sequence is that of 5-hydroxytryptamine receptor 1B (HTR1B) from Sus scrofa (Pig).